The primary structure comprises 344 residues: Methionine import ATP-binding protein MetN 1 (344 aa).

Residues 2-241 (IELRNLSQRF…PHHEVTRALI (240 aa)) enclose the ABC transporter domain. 38–45 (GRSGAGKS) contributes to the ATP binding site.

It belongs to the ABC transporter superfamily. Methionine importer (TC 3.A.1.24) family. As to quaternary structure, the complex is composed of two ATP-binding proteins (MetN), two transmembrane proteins (MetI) and a solute-binding protein (MetQ).

It is found in the cell inner membrane. It carries out the reaction L-methionine(out) + ATP + H2O = L-methionine(in) + ADP + phosphate + H(+). The enzyme catalyses D-methionine(out) + ATP + H2O = D-methionine(in) + ADP + phosphate + H(+). In terms of biological role, part of the ABC transporter complex MetNIQ involved in methionine import. Responsible for energy coupling to the transport system. The polypeptide is Methionine import ATP-binding protein MetN 1 (Burkholderia lata (strain ATCC 17760 / DSM 23089 / LMG 22485 / NCIMB 9086 / R18194 / 383)).